Reading from the N-terminus, the 90-residue chain is Mitochondrial import inner membrane translocase subunit Tim9 (90 aa).

The Twin CX3C motif motif lies at 24 to 48; it reads CFNSCVNEFGSRTVSGKEESCANNC. 2 disulfide bridges follow: Cys-24/Cys-48 and Cys-28/Cys-44.

This sequence belongs to the small Tim family. Heterohexamer; composed of 3 copies of tim-9/tin-9.1 and 3 copies of tim-10/tin-10, named soluble 70 kDa complex. The complex associates with the tim-22 component of the TIM22 complex. Interacts with multi-pass transmembrane proteins in transit.

The protein resides in the mitochondrion inner membrane. In terms of biological role, mitochondrial intermembrane chaperone that participates in the import and insertion of multi-pass transmembrane proteins into the mitochondrial inner membrane. May also be required for the transfer of beta-barrel precursors from the TOM complex to the sorting and assembly machinery (SAM complex) of the outer membrane. Acts as a chaperone-like protein that protects the hydrophobic precursors from aggregation and guide them through the mitochondrial intermembrane space. In Caenorhabditis elegans, this protein is Mitochondrial import inner membrane translocase subunit Tim9 (tin-9.1).